Here is a 664-residue protein sequence, read N- to C-terminus: Fructose-1,6-bisphosphatase class 3 (664 aa).

The protein belongs to the FBPase class 3 family. Requires Mn(2+) as cofactor.

It catalyses the reaction beta-D-fructose 1,6-bisphosphate + H2O = beta-D-fructose 6-phosphate + phosphate. Its pathway is carbohydrate biosynthesis; gluconeogenesis. The polypeptide is Fructose-1,6-bisphosphatase class 3 (Bacteroides thetaiotaomicron (strain ATCC 29148 / DSM 2079 / JCM 5827 / CCUG 10774 / NCTC 10582 / VPI-5482 / E50)).